The following is a 271-amino-acid chain: WUSCHEL-related homeobox 6 (271 aa).

A DNA-binding region (homeobox; WUS-type) is located at residues 57 to 121 (AATLRWNPTP…NHKARERLKR (65 aa)). The disordered stretch occupies residues 118-195 (RLKRRRREGG…TEESDQRASE (78 aa)). Composition is skewed to basic and acidic residues over residues 132–148 (PHKDVKDSSSGGHRVDQ) and 180–195 (NEDHGTTEESDQRASE).

The protein belongs to the WUS homeobox family. As to expression, highly expressed in developing ovules. Present in developing primordia and differentiating organs but absent in mature organs.

The protein resides in the nucleus. Transcription factor that plays a central role in ovule patterning by regulating cell proliferation of the maternal integuments and differentiation of the maegaspore mother cell (MCC). Involved in AGAMOUS (AG) repression in leaves. In Arabidopsis thaliana (Mouse-ear cress), this protein is WUSCHEL-related homeobox 6 (WOX6).